A 26-amino-acid polypeptide reads, in one-letter code: Guentherin (26 aa).

As to expression, expressed by the skin glands.

The protein localises to the secreted. Functionally, antimicrobial peptide. Active against the Gram-positive bacteria S.aureus FDA209P (MIC=35.5 ug/ml) and B.subtilis ATCC 6633 (MIC&gt;64 ug/ml), but not active against the Gram-negative bacterium E.coli or the fungus C.albicans. The protein is Guentherin of Sylvirana guentheri (Gunther's frog).